We begin with the raw amino-acid sequence, 1948 residues long: MRGPLGTEEELPRLFAEEMENEEEMSEEEDGGLEGFEDFFPAEPVSLPKKKPKKLKESKSKGKRKKKEGSNDELSENEEDLEEKSESEGSDYSPTKKKKKKLKEKKEKKAKRKKRDEDEEDNEDGGLKEPKSSGQLMAEWGLDDVDYLFSEDDYHTLTNYKAFSQFLRPLIAKKNPKIPMSKMMTVLGAKWREFSANNPFKGSSAAAAAAAVAAAVETVTIAPPLAISPQQVPQPLPVRKAKTKEGKGPGVRKKNKGAKDSKKKGRGKRVAGLKFRFGGISKRKKGSSSEEDEPEDSDLDNASIHSSSVRSECSAALGKKNKRRRKKKRIDDGDGYETDHQDYCEVCQQGGEIILCDTCPRAYHLVCLDPELEKAPEGKWSCPHCEKEGIQWEPKDDDEEEEEGGCEEEEDDHMEFCRVCKDGGELLCCDACPSSYHLHCLNPPLPEIPNGEWLCPRCTCPPLKGKVQRILHWRWTEPPAPFMVGLPGPEVEPGMPPPRPLEGIPEREFFVKWAGLSYWHCSWVKELQLELYHTVMYRNYQRKNDMDEPPPFDYGSGDEDGKSEKRKNKDPLYAKMEERFYRYGIKPEWMMVHRILNHSFDKKGDVHYLIKWKDLPYDQCTWEIDEIDIPYYDNLKQTYWGHRELMLGEDARLPKRLVKKGKKLKDDKQEKPPDTPIVDPTVKFDKQPWYIDSTGGTLHPYQLEGLNWLRFSWAQGTDTILADEMGLGKTVQTIVFLYSLYKEGHSKGPYLVSAPLSTIINWEREFEMWAPDFYVVTYTGDKESRSVIRENEFSFEDNAIRGGKKVFRMKKEVQIKFHVLLTSYELITIDQAILGSIEWACLVVDEAHRLKNNQSKFFRVLNSYKIDYKLLLTGTPLQNNLEELFHLLNFLTPERFNNLEGFLEEFADISKEDQIKKLHDLLGPHMLRRLKADVFKNMPAKTELIVRVELSQMQKKYYKFILTRNFEALNSKGGGNQVSLLNIMMDLKKCCNHPYLFPVAAVEAPMLPNGSYDGSSLVKSSGKLMLLQKMLKKLRDEGHRVLIFSQMTKMLDLLEDFLEYEGYKYERIDGGITGGLRQEAIDRFNAPGAQQFCFLLSTRAGGLGINLATADTVIIYDSDWNPHNDIQAFSRAHRIGQNKKVMIYRFVTRASVEERITQVAKRKMMLTHLVVRPGLGSKSGSMTKQELDDILKFGTEELFKDDVEGMMSQGQRPTTPIPDVQSTKGGSLAAGAKKKHGGTPPGDNKDVEDSSVIHYDDAAISKLLDRNQDATDDTELQNMNEYLSSFKVAQYVVREEDGVEEVEREVIKQEENVDPDYWEKLLRHHYEQQQEDLARNLGKGKRIRKQVNYNDASQEDQEWQDELSDNQSEYSIGSEDEDEDFEERPEGQSGRRQSRRQLKSDRDKPLPPLLARVGGNIEVLGFNARQRKAFLNAIMRWGMPPQDAFNSHWLVRDLRGKSEKEFRAYVSLFMRHLCEPGADGAETFADGVPREGLSRQHVLTRIGVMSLVRKKVQEFEHVNGKYSTPDLVPEGPEGKKPGEVISSDPNTPVPASPAQLPPAPLGLPDKMEAQLGYTDEKESGTQKPKKSLEIQALPTALDRVEAEDKHQSSDSKDRAREERMEEVEKAQGSPEQPLKEETLPDKEPVPDKLELSLSHSNDFRPDDPKAEEKEPTETQQNGDREEDEEGKKEDKNGKFKFMFNIADGGFTELHTLWQNEERAAVSSGKIYEIWHRRHDYWLLAGIVTHGYARWQDIQNDPRYMILNEPFKSEVHKGNYLEMKNKFLARRFKLLEQALVIEEQLRRAAYLNMTQDPNHPAMALNARLAEVECLAESHQHLSKESLAGNKPANAVLHKVLNQLEELLSDMKADVTRLPSMLSRIPPVAARLQMSERSILSRLTNRAGDPTIQQGAFGSSQMYNNSFGPNFRGPGPGGIVNYNQMPLGPYVTGR.

Disordered stretches follow at residues 1 to 136 (MRGP…SGQL), 228 to 268 (SPQQ…GRGK), and 281 to 336 (SKRK…GDGY). Composition is skewed to acidic residues over residues 17-37 (EEMENEEEMSEEEDGGLEGFE) and 71-89 (NDELSENEEDLEEKSESEG). Basic residues-rich tracts occupy residues 95–114 (TKKKKKKLKEKKEKKAKRKK) and 250–268 (GVRKKNKGAKDSKKKGRGK). The segment covering 289 to 299 (SEEDEPEDSDL) has biased composition (acidic residues). Basic residues predominate over residues 319–328 (KKNKRRRKKK). 2 consecutive PHD-type zinc fingers follow at residues 341–388 (QDYC…CEKE) and 414–461 (MEFC…CTCP). The interval 341–651 (QDYCEVCQQG…HRELMLGEDA (311 aa)) is histone-binding. The Chromo 1 domain occupies 495-552 (MPPPRPLEGIPEREFFVKWAGLSYWHCSWVKELQLELYHTVMYRNYQRKNDMDEPPPF). The segment at 547–569 (DEPPPFDYGSGDEDGKSEKRKNK) is disordered. Residues 559–569 (EDGKSEKRKNK) show a composition bias toward basic and acidic residues. Residues 590–651 (MMVHRILNHS…HRELMLGEDA (62 aa)) form the Chromo 2 domain. One can recognise a Helicase ATP-binding domain in the interval 710–894 (RFSWAQGTDT…FHLLNFLTPE (185 aa)). 723-730 (DEMGLGKT) lines the ATP pocket. The DEAH box motif lies at 845–848 (DEAH). The Helicase C-terminal domain maps to 1026-1191 (LLQKMLKKLR…MTKQELDDIL (166 aa)). 4 disordered regions span residues 1206-1250 (MMSQ…VEDS), 1349-1409 (YNDA…LPPL), 1521-1566 (KYST…LPDK), and 1595-1692 (TALD…EDKN). Acidic residues-rich tracts occupy residues 1353-1364 (SQEDQEWQDELS) and 1374-1383 (SEDEDEDFEE). Position 1388 is an N5-methylglutamine (Gln-1388). A compositionally biased stretch (pro residues) spans 1547–1561 (TPVPASPAQLPPAPL). Residue Ser-1552 is modified to Phosphoserine. Composition is skewed to basic and acidic residues over residues 1598 to 1625 (DRVEAEDKHQSSDSKDRAREERMEEVEK), 1633 to 1650 (PLKEETLPDKEPVPDKLE), and 1657 to 1672 (NDFRPDDPKAEEKEPT).

The protein belongs to the SNF2/RAD54 helicase family. As to quaternary structure, component of the nucleosome remodeling and deacetylase (NuRD) repressor complex, composed of core proteins MTA1, MTA2, MTA3, RBBP4, RBBP7, HDAC1, HDAC2, MBD2, MBD3, and peripherally associated proteins CDK2AP1, CDK2AP2, GATAD2A, GATAD2B, CHD3, CHD4 and CHD5. The exact stoichiometry of the NuRD complex is unknown, and some subunits such as MBD2 and MBD3, GATAD2A and GATAD2B, and CHD3, CHD4 and CHD5 define mutually exclusive NuRD complexes. Interacts with HDAC2. In terms of processing, methylated at Gln-1388 by N6AMT1. In terms of tissue distribution, expressed in brain regions enriched in neurons and not in regions rich in glial cells (at protein level).

The protein resides in the nucleus. It localises to the chromosome. The enzyme catalyses ATP + H2O = ADP + phosphate + H(+). ATP-dependent chromatin-remodeling factor that binds DNA through histones and regulates gene transcription. May specifically recognize and bind trimethylated 'Lys-27' (H3K27me3) and non-methylated 'Lys-4' of histone H3. Acts as a component of the histone deacetylase NuRD complex which participates in the remodeling of chromatin. Plays a role in the development of the nervous system by activating the expression of genes promoting neuron terminal differentiation. In parallel, it may also positively regulate the trimethylation of histone H3 at 'Lys-27' thereby specifically repressing genes that promote the differentiation into non-neuronal cell lineages. Regulates the expression of genes involved in cell proliferation and differentiation. Downstream activated genes may include CDKN2A that positively regulates the p53/TP53 pathway, which in turn, prevents cell proliferation. In spermatogenesis, it probably regulates histone hyperacetylation and the replacement of histones by transition proteins in chromatin, a crucial step in the condensation of spermatid chromatin and the production of functional spermatozoa. The polypeptide is Chromodomain-helicase-DNA-binding protein 5 (Chd5) (Rattus norvegicus (Rat)).